Here is a 517-residue protein sequence, read N- to C-terminus: Ribose import ATP-binding protein RbsA 1 (517 aa).

2 consecutive ABC transporter domains span residues 11–251 (LEMR…VGRD) and 263–507 (YDPG…ALAT). Position 43–50 (43–50 (GENGAGKS)) interacts with ATP.

Belongs to the ABC transporter superfamily. Ribose importer (TC 3.A.1.2.1) family. As to quaternary structure, the complex is composed of an ATP-binding protein (RbsA), two transmembrane proteins (RbsC) and a solute-binding protein (RbsB).

Its subcellular location is the cell inner membrane. It catalyses the reaction D-ribose(out) + ATP + H2O = D-ribose(in) + ADP + phosphate + H(+). Functionally, part of the ABC transporter complex RbsABC involved in ribose import. Responsible for energy coupling to the transport system. In Burkholderia ambifaria (strain ATCC BAA-244 / DSM 16087 / CCUG 44356 / LMG 19182 / AMMD) (Burkholderia cepacia (strain AMMD)), this protein is Ribose import ATP-binding protein RbsA 1.